Consider the following 634-residue polypeptide: Chaperone protein DnaK (634 aa).

Thr-197 bears the Phosphothreonine; by autocatalysis mark. Residues 592-634 (IGSSVYQQPGNQPPAPGGPNANASDDKGPDDDVIDADFTETKD) form a disordered region. Acidic residues predominate over residues 619-634 (GPDDDVIDADFTETKD).

Belongs to the heat shock protein 70 family.

Its function is as follows. Acts as a chaperone. In Prochlorococcus marinus (strain MIT 9515), this protein is Chaperone protein DnaK.